The primary structure comprises 339 residues: Probable N5-carboxyaminoimidazole ribonucleotide mutase (339 aa).

Substrate-binding residues include S11, D14, and R41.

It belongs to the AIR carboxylase family. Class I subfamily.

It carries out the reaction 5-carboxyamino-1-(5-phospho-D-ribosyl)imidazole + H(+) = 5-amino-1-(5-phospho-D-ribosyl)imidazole-4-carboxylate. It participates in purine metabolism; IMP biosynthesis via de novo pathway; 5-amino-1-(5-phospho-D-ribosyl)imidazole-4-carboxylate from 5-amino-1-(5-phospho-D-ribosyl)imidazole (N5-CAIR route): step 2/2. In terms of biological role, catalyzes the conversion of N5-carboxyaminoimidazole ribonucleotide (N5-CAIR) to 4-carboxy-5-aminoimidazole ribonucleotide (CAIR). This Methanobrevibacter smithii protein is Probable N5-carboxyaminoimidazole ribonucleotide mutase.